The following is a 542-amino-acid chain: Chaperonin GroEL (542 aa).

Residues 29-32 (TLGP), 86-90 (DGTTT), glycine 413, 476-478 (NAA), and aspartate 492 contribute to the ATP site.

It belongs to the chaperonin (HSP60) family. Forms a cylinder of 14 subunits composed of two heptameric rings stacked back-to-back. Interacts with the co-chaperonin GroES.

It is found in the cytoplasm. It catalyses the reaction ATP + H2O + a folded polypeptide = ADP + phosphate + an unfolded polypeptide.. Its function is as follows. Together with its co-chaperonin GroES, plays an essential role in assisting protein folding. The GroEL-GroES system forms a nano-cage that allows encapsulation of the non-native substrate proteins and provides a physical environment optimized to promote and accelerate protein folding. The protein is Chaperonin GroEL of Streptococcus mutans serotype c (strain ATCC 700610 / UA159).